A 264-amino-acid chain; its full sequence is Small ribosomal subunit protein uS2 (264 aa).

This sequence belongs to the universal ribosomal protein uS2 family.

This is Small ribosomal subunit protein uS2 from Helicobacter pylori (strain Shi470).